We begin with the raw amino-acid sequence, 151 residues long: Deoxyuridine 5'-triphosphate nucleotidohydrolase (151 aa).

Substrate contacts are provided by residues R70–G72, N83, L87–D89, and M97.

This sequence belongs to the dUTPase family. It depends on Mg(2+) as a cofactor.

It catalyses the reaction dUTP + H2O = dUMP + diphosphate + H(+). Its pathway is pyrimidine metabolism; dUMP biosynthesis; dUMP from dCTP (dUTP route): step 2/2. Functionally, this enzyme is involved in nucleotide metabolism: it produces dUMP, the immediate precursor of thymidine nucleotides and it decreases the intracellular concentration of dUTP so that uracil cannot be incorporated into DNA. The chain is Deoxyuridine 5'-triphosphate nucleotidohydrolase from Azotobacter vinelandii (strain DJ / ATCC BAA-1303).